The sequence spans 143 residues: Transcriptional regulator MraZ (143 aa).

SpoVT-AbrB domains lie at 5 to 47 (EFDH…TLEE) and 76 to 119 (AVEV…DRET).

It belongs to the MraZ family. In terms of assembly, forms oligomers.

Its subcellular location is the cytoplasm. It localises to the nucleoid. The protein is Transcriptional regulator MraZ of Staphylococcus epidermidis (strain ATCC 35984 / DSM 28319 / BCRC 17069 / CCUG 31568 / BM 3577 / RP62A).